Here is a 448-residue protein sequence, read N- to C-terminus: Acyl-lipid (9-3)-desaturase (448 aa).

Residues 6–90 enclose the Cytochrome b5 heme-binding domain; the sequence is KKYITSDELK…LKDYSVSEVS (85 aa). The heme site is built by His41 and His64. A run of 2 helical transmembrane segments spans residues 112-132 and 137-157; these read IMFA…YGVL and VLVH…SGWI. Residues 159 to 163 carry the Histidine box-1 motif; it reads HDAGH. The chain crosses the membrane as a helical span at residues 172-192; it reads LNKFMGIFAANCLSGISIGWW. The Histidine box-2 signature appears at 196–200; sequence HNAHH. 3 consecutive transmembrane segments (helical) span residues 212–232, 254–274, and 286–306; these read LQYI…TSHF, FYPI…IMLL, and LLGC…LPNW. The Histidine box-3 signature appears at 373 to 377; that stretch reads QIEHH.

It belongs to the fatty acid desaturase type 1 family.

The protein resides in the endoplasmic reticulum membrane. The enzyme catalyses (9Z,12Z,15Z)-octadecatrienoyl-containing glycerolipid + 2 Fe(II)-[cytochrome b5] + O2 + 2 H(+) = (6Z,9Z,12Z,15Z)-octadecatetraenoyl-containing glycerolipid + 2 Fe(III)-[cytochrome b5] + 2 H2O. The catalysed reaction is a (9Z,12Z)-octadecadienoyl-containing glycerolipid + 2 Fe(II)-[cytochrome b5] + O2 + 2 H(+) = (6Z,9Z,12Z)-octadecatrienoyl-containing glycerolipid + 2 Fe(III)-[cytochrome b5] + 2 H2O. The protein operates within lipid metabolism; polyunsaturated fatty acid biosynthesis. Functionally, fatty acid desaturase able to introduce a delta(6)-double bond into delta(9)-unsaturated fatty-acid substrates. Can use both linoleic acid (18:2(9Z,12Z)) and alpha-linolenic acid (18:3(9Z,12Z,15Z)) as substrates. In Borago officinalis (Bourrache), this protein is Acyl-lipid (9-3)-desaturase.